A 102-amino-acid polypeptide reads, in one-letter code: NADH-quinone oxidoreductase subunit K (102 aa).

Transmembrane regions (helical) follow at residues 4–24, 31–51, and 65–85; these read IGLNHYLVLSTILFAIGLVGV, LMLFFATEILLNSVNISFAAI, and FFVIAIAASEVAVGLGLLIVW.

This sequence belongs to the complex I subunit 4L family. As to quaternary structure, NDH-1 is composed of 14 different subunits. Subunits NuoA, H, J, K, L, M, N constitute the membrane sector of the complex.

It localises to the cell inner membrane. It catalyses the reaction a quinone + NADH + 5 H(+)(in) = a quinol + NAD(+) + 4 H(+)(out). Its function is as follows. NDH-1 shuttles electrons from NADH, via FMN and iron-sulfur (Fe-S) centers, to quinones in the respiratory chain. The immediate electron acceptor for the enzyme in this species is believed to be ubiquinone. Couples the redox reaction to proton translocation (for every two electrons transferred, four hydrogen ions are translocated across the cytoplasmic membrane), and thus conserves the redox energy in a proton gradient. This chain is NADH-quinone oxidoreductase subunit K, found in Sulfurimonas denitrificans (strain ATCC 33889 / DSM 1251) (Thiomicrospira denitrificans (strain ATCC 33889 / DSM 1251)).